The sequence spans 420 residues: 26S proteasome non-ATPase regulatory subunit 4 (420 aa).

Residues 1–174 form the VWFA domain; the sequence is MSQEATIIAV…TGSHLISVAP (174 aa). 3 UIM domains span residues 210–229, 255–274, and 288–307; these read AEDPDLLYALRVSMEDQRMR, SEEAMLQQALAMSMQMNNTE, and SEEDQIAYALRMSLQQMGEE. Residues 392-420 form a disordered region; that stretch reads RKAINALTKSQSQRGSKKDEKEDEDKQNS. Positions 407–420 are enriched in basic and acidic residues; the sequence is SKKDEKEDEDKQNS.

The protein belongs to the proteasome subunit S5A family. In terms of assembly, the 26S proteasome is composed of a core protease, known as the 20S proteasome, capped at one or both ends by the 19S regulatory complex (RC). The RC is composed of at least 18 different subunits in two subcomplexes, the base and the lid, which form the portions proximal and distal to the 20S proteolytic core, respectively.

In terms of biological role, binds and presumably selects ubiquitin-conjugates for destruction. This is 26S proteasome non-ATPase regulatory subunit 4 from Schistosoma mansoni (Blood fluke).